The primary structure comprises 207 residues: Ribonuclease HII (207 aa).

The RNase H type-2 domain occupies 10–199 (RLIAGVDEVG…VRNALLDAEL (190 aa)). 3 residues coordinate a divalent metal cation: aspartate 16, glutamate 17, and aspartate 108.

It belongs to the RNase HII family. Mn(2+) is required as a cofactor. The cofactor is Mg(2+).

Its subcellular location is the cytoplasm. It catalyses the reaction Endonucleolytic cleavage to 5'-phosphomonoester.. In terms of biological role, endonuclease that specifically degrades the RNA of RNA-DNA hybrids. This Erwinia tasmaniensis (strain DSM 17950 / CFBP 7177 / CIP 109463 / NCPPB 4357 / Et1/99) protein is Ribonuclease HII.